The primary structure comprises 817 residues: Leucine--tRNA ligase (817 aa).

Positions 42–52 (PYPSGRLHMGH) match the 'HIGH' region motif. Positions 576 to 580 (KMSKS) match the 'KMSKS' region motif. K579 is a binding site for ATP.

Belongs to the class-I aminoacyl-tRNA synthetase family.

The protein resides in the cytoplasm. The enzyme catalyses tRNA(Leu) + L-leucine + ATP = L-leucyl-tRNA(Leu) + AMP + diphosphate. The chain is Leucine--tRNA ligase from Thioalkalivibrio sulfidiphilus (strain HL-EbGR7).